Reading from the N-terminus, the 723-residue chain is Methionine--tRNA ligase (723 aa).

Positions Pro-12 to His-22 match the 'HIGH' region motif. Residues Cys-143, Cys-146, Cys-156, and Cys-159 each coordinate Zn(2+). The 'KMSKS' region signature appears at Lys-345–Ser-349. Residue Lys-348 coordinates ATP. The tract at residues Pro-568 to Ala-604 is disordered. Residues Asp-612–Lys-723 form the tRNA-binding domain.

It belongs to the class-I aminoacyl-tRNA synthetase family. MetG type 1 subfamily. As to quaternary structure, homodimer. Zn(2+) is required as a cofactor.

The protein resides in the cytoplasm. The catalysed reaction is tRNA(Met) + L-methionine + ATP = L-methionyl-tRNA(Met) + AMP + diphosphate. Its function is as follows. Is required not only for elongation of protein synthesis but also for the initiation of all mRNA translation through initiator tRNA(fMet) aminoacylation. This chain is Methionine--tRNA ligase, found in Azoarcus sp. (strain BH72).